A 256-amino-acid chain; its full sequence is Adenylate kinase (256 aa).

49–54 (GAGKGT) lines the ATP pocket. Positions 69-98 (ATGDMLREQVQQKTPLGIEAKKIMDAGGLV) are NMP. AMP is bound by residues threonine 70, arginine 75, 96-98 (GLV), 125-128 (GFPR), and glutamine 132. Positions 166-203 (GRLVHPASGRSYHKEFNPPKKRNVDDVTGEPLIQRSDD) are LID. ATP-binding positions include arginine 167 and 176–177 (SY). AMP-binding residues include arginine 200 and arginine 211. Glutamine 239 serves as a coordination point for ATP.

This sequence belongs to the adenylate kinase family. AK2 subfamily. Monomer.

The protein resides in the cytoplasm. It is found in the cytosol. The protein localises to the mitochondrion intermembrane space. It catalyses the reaction AMP + ATP = 2 ADP. Its function is as follows. Catalyzes the reversible transfer of the terminal phosphate group between ATP and AMP. Plays an important role in cellular energy homeostasis and in adenine nucleotide metabolism. Adenylate kinase activity is critical for regulation of the phosphate utilization and the AMP de novo biosynthesis pathways. The chain is Adenylate kinase from Laccaria bicolor (strain S238N-H82 / ATCC MYA-4686) (Bicoloured deceiver).